A 150-amino-acid polypeptide reads, in one-letter code: Retinal rod rhodopsin-sensitive cGMP 3',5'-cyclic phosphodiesterase subunit delta (150 aa).

The required for association with membranes stretch occupies residues 144 to 150; it reads RVRLFYV.

This sequence belongs to the PDE6D/unc-119 family. As to quaternary structure, interacts with the prenylated catalytic subunits of PDE6, an oligomer composed of two catalytic chains (PDE6A and PDE6B) and two inhibitory chains (gamma); has no effect on enzyme activity but promotes the release of the prenylated enzyme from cell membrane. Interacts with prenylated GRK1 and GRK7. Interacts with prenylated Ras family members, including RAP2A and RAP2C. Interacts with prenylated RHEB and NRAS. Interacts with prenylated HRAS and KRAS. Interacts with RAB13 (prenylated form); dissociates RAB13 from membranes. Interacts with prenylated INPP5E. Interacts with RAB28 (prenylated form); the interaction promotes RAB28 delivery to the photoreceptor outer segments. Interacts with RPGR. Interacts with ARL2. Interacts with ARL3; the interaction occurs specifically with the GTP-bound form of ARL3. Interaction with ARL2 and ARL3 promotes release of farnesylated cargo proteins. In terms of tissue distribution, widely expressed. Detected in various tissues including spleen, prostate gland, testis, ovary, small intestine, colon, retina, and peripheral blood.

The protein localises to the cytoplasm. The protein resides in the cytosol. It localises to the cytoplasmic vesicle membrane. It is found in the cytoskeleton. Its subcellular location is the cilium basal body. Functionally, promotes the release of prenylated target proteins from cellular membranes. Modulates the activity of prenylated or palmitoylated Ras family members by regulating their subcellular location. Required for normal ciliary targeting of farnesylated target proteins, such as INPP5E. Required for RAB28 localization to the cone cell outer segments in the retina. Modulates the subcellular location of target proteins by acting as a GTP specific dissociation inhibitor (GDI). Increases the affinity of ARL3 for GTP by several orders of magnitude. Stabilizes ARL3-GTP by decreasing the nucleotide dissociation rate. This chain is Retinal rod rhodopsin-sensitive cGMP 3',5'-cyclic phosphodiesterase subunit delta (PDE6D), found in Homo sapiens (Human).